Here is a 574-residue protein sequence, read N- to C-terminus: Serine/threonine-protein kinase B (574 aa).

Residues 34–301 (YQTLGLLGKG…VLDALEMPTY (268 aa)) enclose the Protein kinase domain. Residues 40-48 (LGKGGFGAT) and lysine 65 contribute to the ATP site. Aspartate 163 (proton acceptor) is an active-site residue. The disordered stretch occupies residues 319-407 (GAGDEPATGI…GGSVGAGGID (89 aa)). The span at 343–364 (TRFNTNVQPRDPSSTSLNTGIK) shows a compositional bias: polar residues. Pentapeptide repeat domains lie at 454–493 (QNLV…DFGK) and 504–543 (ANLS…NFSG).

Belongs to the protein kinase superfamily. Ser/Thr protein kinase family. In terms of processing, autophosphorylated.

It carries out the reaction L-seryl-[protein] + ATP = O-phospho-L-seryl-[protein] + ADP + H(+). The enzyme catalyses L-threonyl-[protein] + ATP = O-phospho-L-threonyl-[protein] + ADP + H(+). Protein kinase required for cell motility, but not for phototaxis. The polypeptide is Serine/threonine-protein kinase B (spkB) (Synechocystis sp. (strain ATCC 27184 / PCC 6803 / Kazusa)).